The primary structure comprises 236 residues: Orotidine 5'-phosphate decarboxylase (236 aa).

Residues aspartate 12, lysine 34, 60 to 69, threonine 123, arginine 184, glutamine 193, glycine 213, and arginine 214 contribute to the substrate site; that span reads DLKLHDIPHT. Lysine 62 functions as the Proton donor in the catalytic mechanism.

Belongs to the OMP decarboxylase family. Type 1 subfamily. Homodimer.

It carries out the reaction orotidine 5'-phosphate + H(+) = UMP + CO2. It functions in the pathway pyrimidine metabolism; UMP biosynthesis via de novo pathway; UMP from orotate: step 2/2. Functionally, catalyzes the decarboxylation of orotidine 5'-monophosphate (OMP) to uridine 5'-monophosphate (UMP). The chain is Orotidine 5'-phosphate decarboxylase from Gluconobacter oxydans (strain 621H) (Gluconobacter suboxydans).